The sequence spans 298 residues: Aspartate carbamoyltransferase catalytic subunit (298 aa).

Carbamoyl phosphate contacts are provided by Arg-50 and Thr-51. Residue Lys-79 participates in L-aspartate binding. Carbamoyl phosphate-binding residues include Arg-100, His-128, and Gln-131. Arg-160 and Arg-221 together coordinate L-aspartate. 2 residues coordinate carbamoyl phosphate: Leu-260 and Pro-261.

It belongs to the aspartate/ornithine carbamoyltransferase superfamily. ATCase family. In terms of assembly, heterooligomer of catalytic and regulatory chains.

It catalyses the reaction carbamoyl phosphate + L-aspartate = N-carbamoyl-L-aspartate + phosphate + H(+). It functions in the pathway pyrimidine metabolism; UMP biosynthesis via de novo pathway; (S)-dihydroorotate from bicarbonate: step 2/3. In terms of biological role, catalyzes the condensation of carbamoyl phosphate and aspartate to form carbamoyl aspartate and inorganic phosphate, the committed step in the de novo pyrimidine nucleotide biosynthesis pathway. This Methanoculleus marisnigri (strain ATCC 35101 / DSM 1498 / JR1) protein is Aspartate carbamoyltransferase catalytic subunit.